The following is a 606-amino-acid chain: Sporulation kinase A (606 aa).

The PAS 1 domain maps to 3–73; it reads QDTQHVKPLQ…SYFYNEHHLM (71 aa). The PAC 1 domain occupies 77–116; the sequence is FRFIKKDHTIVWVEAAVEIVTTRAERTEREIILKMKVLEE. The 75-residue stretch at 140-214 folds into the PAS 2 domain; the sequence is YITDDYERLV…IRMQKGMEVG (75 aa). Residues 218 to 255 enclose the PAC 2 domain; it reads QTWKRLDGTPVHLEVKASPTVYKNQQAELLLLIDISSR. Positions 265-335 constitute a PAS 3 domain; that stretch reads SRERYQLLIQ…ERIQNIAEQK (71 aa). Positions 402–606 constitute a Histidine kinase domain; that stretch reads GIAHEIRNPL…TAFKISFPKK (205 aa). Position 405 is a phosphohistidine; by autocatalysis (His-405).

It carries out the reaction ATP + protein L-histidine = ADP + protein N-phospho-L-histidine.. Functionally, phosphorylates the sporulation-regulatory proteins spo0A and spo0F. It also autophosphorylates in the presence of ATP. The sequence is that of Sporulation kinase A (kinA) from Bacillus subtilis (strain 168).